The primary structure comprises 407 residues: Putative aspartate aminotransferase, cytoplasmic 2 (407 aa).

The residue at position 249 (K249) is an N6-(pyridoxal phosphate)lysine.

The protein belongs to the class-I pyridoxal-phosphate-dependent aminotransferase family. Homodimer. Pyridoxal 5'-phosphate is required as a cofactor.

The protein resides in the cytoplasm. The catalysed reaction is L-aspartate + 2-oxoglutarate = oxaloacetate + L-glutamate. This chain is Putative aspartate aminotransferase, cytoplasmic 2 (GOT1L1), found in Bos taurus (Bovine).